The chain runs to 604 residues: Ectonucleoside triphosphate diphosphohydrolase 7 (604 aa).

Residues 1 to 28 (MARISFSYLCPASWYFTVPTVSPFLRQR) lie on the Cytoplasmic side of the membrane. Residues 29–49 (VAFLGLFFISCLLLLMLIIDF) traverse the membrane as a helical segment. Residues 50–546 (RHWSASLPRD…QAHGSWFRLS (497 aa)) are Vesicular-facing. Glu-217 (proton acceptor) is an active-site residue. A glycan (N-linked (GlcNAc...) asparagine) is linked at Asn-330. Cys-448 and Cys-477 are oxidised to a cystine. A helical transmembrane segment spans residues 547–567 (FVYNHYLFFACILVVLLAIVL). Topologically, residues 568-604 (YLLRLRRIHHRQTRASAPLDLLWLEEVVPMMGVQVGP) are cytoplasmic.

Belongs to the GDA1/CD39 NTPase family. Ca(2+) is required as a cofactor. Requires Mg(2+) as cofactor.

It is found in the cytoplasmic vesicle membrane. It catalyses the reaction a ribonucleoside 5'-triphosphate + H2O = a ribonucleoside 5'-diphosphate + phosphate + H(+). It carries out the reaction UTP + H2O = UDP + phosphate + H(+). The enzyme catalyses GTP + H2O = GDP + phosphate + H(+). The catalysed reaction is CTP + H2O = CDP + phosphate + H(+). In terms of biological role, catalyzes the hydrolysis of nucleoside triphosphates and diphosphates in a calcium- or magnesium-dependent manner. Preferentially hydrolyzes nucleoside 5'-triphosphates, with substrate preference for UTP &gt; GTP &gt; CTP. Hydrolyzes ATP and nucleoside diphosphates only to a minor extent. The sequence is that of Ectonucleoside triphosphate diphosphohydrolase 7 (ENTPD7) from Pongo abelii (Sumatran orangutan).